The primary structure comprises 972 residues: MGPGVLLLLLVATAWHGQGIPVIEPSVPELVVKPGATVTLRCVGNGSVEWDGPPSPHWTLYSDGSSSILSTNNATFQNTGTYRCTEPGDPLGGSAAIHLYVKDPARPWNVLAQEVVVFEDQDALLPCLLTDPVLEAGVSLVRVRGRPLMRHTNYSFSPWHGFTIHRAKFIQSQDYQCSALMGGRKVMSISIRLKVQKVIPGPPALTLVPAELVRIRGEAAQIVCSASSVDVNFDVFLQHNNTKLAIPQQSDFHNNRYQKVLTLNLDQVDFQHAGNYSCVASNVQGKHSTSMFFRVVESAYLNLSSEQNLIQEVTVGEGLNLKVMVEAYPGLQGFNWTYLGPFSDHQPEPKLANATTKDTYRHTFTLSLPRLKPSEAGRYSFLARNPGGWRALTFELTLRYPPEVSVIWTFINGSGTLLCAASGYPQPNVTWLQCSGHTDRCDEAQVLQVWDDPYPEVLSQEPFHKVTVQSLLTVETLEHNQTYECRAHNSVGSGSWAFIPISAGAHTHPPDEFLFTPVVVACMSIMALLLLLLLLLLYKYKQKPKYQVRWKIIESYEGNSYTFIDPTQLPYNEKWEFPRNNLQFGKTLGAGAFGKVVEATAFGLGKEDAVLKVAVKMLKSTAHADEKEALMSELKIMSHLGQHENIVNLLGACTHGGPVLVITEYCCYGDLLNFLRRKAEAMLGPSLSPGQDPEGGVDYKNIHLEKKYVRRDSGFSSQGVDTYVEMRPVSTSSNDSFSEQDLDKEDGRPLELRDLLHFSSQVAQGMAFLASKNCIHRDVAARNVLLTNGHVAKIGDFGLARDIMNDSNYIVKGNARLPVKWMAPESIFDCVYTVQSDVWSYGILLWEIFSLGLNPYPGILVNSKFYKLVKDGYQMAQPAFAPKNIYSIMQACWALEPTHRPTFQQICSFLQEQAQEDRRERDYTNLPSSSRSGGSGSSSSELEEESSSEHLTCCEQGDIAQPLLQPNNYQFC.

The signal sequence occupies residues 1-19 (MGPGVLLLLLVATAWHGQG). The Extracellular segment spans residues 20 to 517 (IPVIEPSVPE…HPPDEFLFTP (498 aa)). Ig-like C2-type domains follow at residues 21 to 104 (PVIE…VKDP), 107 to 197 (PWNV…KVQK), 203 to 290 (PALT…HSTS), 299 to 399 (AYLN…LTLR), and 402 to 502 (PEVS…IPIS). Cystine bridges form between Cys-42-Cys-84, Cys-127-Cys-177, and Cys-224-Cys-278. 11 N-linked (GlcNAc...) asparagine glycosylation sites follow: Asn-45, Asn-73, Asn-153, Asn-240, Asn-275, Asn-302, Asn-335, Asn-353, Asn-412, Asn-428, and Asn-480. Residues Cys-419 and Cys-485 are joined by a disulfide bond. A helical membrane pass occupies residues 518–538 (VVVACMSIMALLLLLLLLLLY). The Cytoplasmic segment spans residues 539-972 (KYKQKPKYQV…LLQPNNYQFC (434 aa)). Residues 542-574 (QKPKYQVRWKIIESYEGNSYTFIDPTQLPYNEK) form a regulatory juxtamembrane domain region. Residues Tyr-546 and Tyr-561 each carry the phosphotyrosine; by autocatalysis modification. Positions 582–910 (LQFGKTLGAG…PTFQQICSFL (329 aa)) constitute a Protein kinase domain. Residues 588–596 (LGAGAFGKV) and Lys-616 each bind ATP. Residues Tyr-699 and Tyr-708 each carry the phosphotyrosine; by autocatalysis modification. Phosphoserine is present on Ser-713. A Phosphotyrosine; by autocatalysis modification is found at Tyr-723. Residue Asp-778 is the Proton acceptor of the active site. An activation loop region spans residues 796 to 818 (DFGLARDIMNDSNYIVKGNARLP). A phosphotyrosine; by autocatalysis mark is found at Tyr-809 and Tyr-923. The segment at 918–950 (RRERDYTNLPSSSRSGGSGSSSSELEEESSSEH) is disordered. Over residues 928-940 (SSSRSGGSGSSSS) the composition is skewed to low complexity. Tyr-969 carries the post-translational modification Phosphotyrosine; by autocatalysis.

This sequence belongs to the protein kinase superfamily. Tyr protein kinase family. CSF-1/PDGF receptor subfamily. As to quaternary structure, interacts with INPPL1/SHIP2 and THOC5. Monomer. Homodimer. Interacts with CSF1 and IL34. Interaction with dimeric CSF1 or IL34 leads to receptor homodimerization. Interacts (tyrosine phosphorylated) with PLCG2 (via SH2 domain). Interacts (tyrosine phosphorylated) with PIK3R1 (via SH2 domain). Interacts (tyrosine phosphorylated) with FYN, YES1 and SRC (via SH2 domain). Interacts (tyrosine phosphorylated) with CBL, GRB2 and SLA2. Autophosphorylated in response to CSF1 or IL34 binding. Phosphorylation at Tyr-561 is important for normal down-regulation of signaling by ubiquitination, internalization and degradation. Phosphorylation at Tyr-561 and Tyr-809 is important for interaction with SRC family members, including FYN, YES1 and SRC, and for subsequent activation of these protein kinases. Phosphorylation at Tyr-699 and Tyr-923 is important for interaction with GRB2. Phosphorylation at Tyr-723 is important for interaction with PIK3R1. Phosphorylation at Tyr-708 is important for normal receptor degradation. Phosphorylation at Tyr-723 and Tyr-809 is important for interaction with PLCG2. Phosphorylation at Tyr-969 is important for interaction with CBL. Dephosphorylation by PTPN2 negatively regulates downstream signaling and macrophage differentiation. Post-translationally, ubiquitinated. Becomes rapidly polyubiquitinated after autophosphorylation, leading to its degradation. Expressed in bone marrow and in differentiated blood mononuclear cells.

Its subcellular location is the cell membrane. The enzyme catalyses L-tyrosyl-[protein] + ATP = O-phospho-L-tyrosyl-[protein] + ADP + H(+). With respect to regulation, present in an inactive conformation in the absence of bound ligand. CSF1 or IL34 binding leads to dimerization and activation by autophosphorylation on tyrosine residues. Inhibited by imatinib/STI-571 (Gleevec), dasatinib, sunitinib/SU11248, lestaurtinib/CEP-701, midostaurin/PKC-412, Ki20227, linifanib/ABT-869, Axitinib/AG013736, sorafenib/BAY 43-9006 and GW2580. Tyrosine-protein kinase that acts as a cell-surface receptor for CSF1 and IL34 and plays an essential role in the regulation of survival, proliferation and differentiation of hematopoietic precursor cells, especially mononuclear phagocytes, such as macrophages and monocytes. Promotes the release of pro-inflammatory chemokines in response to IL34 and CSF1, and thereby plays an important role in innate immunity and in inflammatory processes. Plays an important role in the regulation of osteoclast proliferation and differentiation, the regulation of bone resorption, and is required for normal bone and tooth development. Required for normal male and female fertility, and for normal development of milk ducts and acinar structures in the mammary gland during pregnancy. Promotes reorganization of the actin cytoskeleton, regulates formation of membrane ruffles, cell adhesion and cell migration, and promotes cancer cell invasion. Activates several signaling pathways in response to ligand binding, including the ERK1/2 and the JNK pathway. Phosphorylates PIK3R1, PLCG2, GRB2, SLA2 and CBL. Activation of PLCG2 leads to the production of the cellular signaling molecules diacylglycerol and inositol 1,4,5-trisphosphate, that then lead to the activation of protein kinase C family members, especially PRKCD. Phosphorylation of PIK3R1, the regulatory subunit of phosphatidylinositol 3-kinase, leads to activation of the AKT1 signaling pathway. Activated CSF1R also mediates activation of the MAP kinases MAPK1/ERK2 and/or MAPK3/ERK1, and of the SRC family kinases SRC, FYN and YES1. Activated CSF1R transmits signals both via proteins that directly interact with phosphorylated tyrosine residues in its intracellular domain, or via adapter proteins, such as GRB2. Promotes activation of STAT family members STAT3, STAT5A and/or STAT5B. Promotes tyrosine phosphorylation of SHC1 and INPP5D/SHIP-1. Receptor signaling is down-regulated by protein phosphatases, such as INPP5D/SHIP-1, that dephosphorylate the receptor and its downstream effectors, and by rapid internalization of the activated receptor. In the central nervous system, may play a role in the development of microglia macrophages. This chain is Macrophage colony-stimulating factor 1 receptor (CSF1R), found in Homo sapiens (Human).